A 317-amino-acid polypeptide reads, in one-letter code: Transaldolase (317 aa).

The active-site Schiff-base intermediate with substrate is the lysine 126.

Belongs to the transaldolase family. Type 1 subfamily. In terms of assembly, homodimer.

It localises to the cytoplasm. The enzyme catalyses D-sedoheptulose 7-phosphate + D-glyceraldehyde 3-phosphate = D-erythrose 4-phosphate + beta-D-fructose 6-phosphate. The protein operates within carbohydrate degradation; pentose phosphate pathway; D-glyceraldehyde 3-phosphate and beta-D-fructose 6-phosphate from D-ribose 5-phosphate and D-xylulose 5-phosphate (non-oxidative stage): step 2/3. Its function is as follows. Transaldolase is important for the balance of metabolites in the pentose-phosphate pathway. The sequence is that of Transaldolase from Paraburkholderia phytofirmans (strain DSM 17436 / LMG 22146 / PsJN) (Burkholderia phytofirmans).